Reading from the N-terminus, the 541-residue chain is MAPLPAAATATASSAATPADDEAHSLLPSTPSNEEDDDDLEERAYEATEKVIVSISDFPDADDDEEESGLATSTAASGIPPFSWRKLWLFTGPGFLMSIAFLDPGNLEGDLQAGAVAGDTLLWLLLWATSMGLLVQLLAARVGVATGRHLAELCRDEYPSWARRALWLMAEVAMVGADIQEVIGSAIAIKILSRGFLPLWAGVVITALDCFIFLSLENYGVRKLEAVFAILIATMAVSFAWMFTDTKPNMKNLFIGILVPKLSSRTIRQAVGVVGCVIMPHNVFLHSALVQSRKIDPNKEHQVREALRYYSIESTIALAVSFMINLFVTTVFAKGFYGTKEAGNIGLENAGQYLQEKFGGGFFPILYIWGIGLLAAGQSSTITGTYAGQFIMGGFLNLKLKKWIRSLITRSFAIVPTIIVALFFDKSDSLDVLNEWLNVLQSIQIPFALIPLITLVSKEKVMGVFKIGRNTQAVTWTVATLLITINGYLLLDFFSSEIRGLLSGSILCVAVLAYASFVLYLILRGTELPNQIITTIRKSFS.

The span at 1–18 shows a compositional bias: low complexity; the sequence is MAPLPAAATATASSAATP. The interval 1-44 is disordered; sequence MAPLPAAATATASSAATPADDEAHSLLPSTPSNEEDDDDLEERA. 12 helical membrane passes run 87–107, 120–140, 172–192, 196–216, 224–244, 270–290, 316–336, 358–378, 404–424, 436–456, 474–494, and 502–522; these read LWLFTGPGFLMSIAFLDPGNL, TLLWLLLWATSMGLLVQLLAA, VAMVGADIQEVIGSAIAIKIL, FLPLWAGVVITALDCFIFLSL, LEAVFAILIATMAVSFAWMFT, AVGVVGCVIMPHNVFLHSALV, IALAVSFMINLFVTTVFAKGF, FGGGFFPILYIWGIGLLAAGQ, IRSLITRSFAIVPTIIVALFF, WLNVLQSIQIPFALIPLITLV, VTWTVATLLITINGYLLLDFF, and LSGSILCVAVLAYASFVLYLI.

It belongs to the NRAMP (TC 2.A.55) family.

It is found in the membrane. Probable metal transporter. The polypeptide is Metal transporter Nramp6 (NRAMP6) (Oryza sativa subsp. japonica (Rice)).